The following is a 164-amino-acid chain: Transcription factor MafF (164 aa).

The segment at 51 to 76 is basic motif; it reads RLKQRRRTLKNRGYAASCRVKRVCQK. Residues 51–114 form the bZIP domain; that stretch reads RLKQRRRTLK…DALRGKCEAL (64 aa). Positions 79–93 are leucine-zipper; it reads LQKQKSELEREVDKL. A disordered region spans residues 141-164; that stretch reads KSTPGSGSGPAHGPDPAHGPASCS. Positions 149–164 are enriched in low complexity; the sequence is GPAHGPDPAHGPASCS.

The protein belongs to the bZIP family. Maf subfamily. As to quaternary structure, monomer and homo- or heterodimer. Interacts with MIP. Forms high affinity heterodimers with members of the CNC-bZIP family such as NFE2L1/NRF1. As to expression, expressed in the term myometrium and kidney.

Its subcellular location is the nucleus. Its function is as follows. Since they lack a putative transactivation domain, the small Mafs behave as transcriptional repressors when they dimerize among themselves. However, they seem to serve as transcriptional activators by dimerizing with other (usually larger) basic-zipper proteins, such as NFE2L1/NRF1, and recruiting them to specific DNA-binding sites. Interacts with the upstream promoter region of the oxytocin receptor gene. May be a transcriptional enhancer in the up-regulation of the oxytocin receptor gene at parturition. This chain is Transcription factor MafF (MAFF), found in Homo sapiens (Human).